The primary structure comprises 282 residues: Ribonuclease P protein subunit p38 (282 aa).

Disordered stretches follow at residues 1-21 (MAAA…PLPV) and 61-103 (EDRK…QASG). Ala2 is modified (N-acetylalanine). Phosphoserine is present on Ser12. The span at 88–97 (EDLKKEKPKG) shows a compositional bias: basic and acidic residues. A phosphoserine mark is found at Ser226 and Ser235. The segment at 262-282 (KLIPNPNKIRKPPKSKRTASK) is disordered. Positions 269 to 282 (KIRKPPKSKRTASK) are enriched in basic residues.

The protein belongs to the eukaryotic ribosomal protein eL8 family. Component of nuclear RNase P and RNase MRP ribonucleoproteins. RNase P consists of a catalytic RNA moiety and about 10 protein subunits; POP1, POP4, POP5, POP7, RPP14, RPP21, RPP25, RPP30, RPP38 and RPP40. Within the RNase P complex, POP1, POP7 and RPP25 form the 'finger' subcomplex, POP5, RPP14, RPP40 and homodimeric RPP30 form the 'palm' subcomplex, and RPP21, POP4 and RPP38 form the 'wrist' subcomplex. All subunits of the RNase P complex interact with the catalytic RNA. Several subunits of RNase P are also part of the RNase MRP complex. RNase MRP consists of a catalytic RNA moiety and about 8 protein subunits; POP1, POP7, RPP25, RPP30, RPP38, RPP40 and possibly also POP4 and POP5.

Its subcellular location is the nucleus. It is found in the nucleolus. In terms of biological role, component of ribonuclease P, a ribonucleoprotein complex that generates mature tRNA molecules by cleaving their 5'-ends. Also a component of the MRP ribonuclease complex, which cleaves pre-rRNA sequences. The chain is Ribonuclease P protein subunit p38 (RPP38) from Bos taurus (Bovine).